The chain runs to 245 residues: tRNA1(Val) (adenine(37)-N6)-methyltransferase (245 aa).

It belongs to the methyltransferase superfamily. tRNA (adenine-N(6)-)-methyltransferase family.

The protein localises to the cytoplasm. The enzyme catalyses adenosine(37) in tRNA1(Val) + S-adenosyl-L-methionine = N(6)-methyladenosine(37) in tRNA1(Val) + S-adenosyl-L-homocysteine + H(+). In terms of biological role, specifically methylates the adenine in position 37 of tRNA(1)(Val) (anticodon cmo5UAC). This chain is tRNA1(Val) (adenine(37)-N6)-methyltransferase, found in Escherichia coli (strain SE11).